The following is a 582-amino-acid chain: Aspartate--tRNA ligase (582 aa).

E174 provides a ligand contact to L-aspartate. Residues Q198 to K201 are aspartate. Residue R220 participates in L-aspartate binding. Residues R220–E222 and Q229 contribute to the ATP site. H443 lines the L-aspartate pocket. E477 contributes to the ATP binding site. R484 is a binding site for L-aspartate. Residue G529 to R532 participates in ATP binding.

It belongs to the class-II aminoacyl-tRNA synthetase family. Type 1 subfamily. As to quaternary structure, homodimer.

Its subcellular location is the cytoplasm. It catalyses the reaction tRNA(Asp) + L-aspartate + ATP = L-aspartyl-tRNA(Asp) + AMP + diphosphate. Its function is as follows. Catalyzes the attachment of L-aspartate to tRNA(Asp) in a two-step reaction: L-aspartate is first activated by ATP to form Asp-AMP and then transferred to the acceptor end of tRNA(Asp). The chain is Aspartate--tRNA ligase from Streptococcus pyogenes serotype M18 (strain MGAS8232).